The following is a 423-amino-acid chain: Cytochrome c biogenesis protein Ccs1 (423 aa).

Transmembrane regions (helical) follow at residues 11-31 (LKFA…GSII), 70-90 (NFWF…CTFF), and 153-173 (IAPV…IFAS).

This sequence belongs to the Ccs1/CcsB family. As to quaternary structure, may interact with CcsA.

Its subcellular location is the plastid. The protein localises to the chloroplast thylakoid membrane. Required during biogenesis of c-type cytochromes (cytochrome c6 and cytochrome f) at the step of heme attachment. In Heterosigma akashiwo (strain NIES-293 / 8280G21-1), this protein is Cytochrome c biogenesis protein Ccs1.